The sequence spans 462 residues: Putative E3 ubiquitin-protein ligase XBAT35 (462 aa).

ANK repeat units lie at residues 6–35 (SKGE…DLEW), 39–69 (EGKT…NVNA), and 75–104 (HAGT…NPLV). Disordered stretches follow at residues 277–341 (HPPV…GKAS) and 356–402 (SSPS…EGER). The span at 304 to 317 (SLHTTMSDPSNLNH) shows a compositional bias: polar residues. Residues 319–341 (SIGQASSSSGPSSSTAPPSGKAS) show a composition bias toward low complexity. Residues 411 to 450 (CAICLDAPSEAVCVPCGHVAGCMSCLKEIKSKNWGCPVCR) form an RING-type zinc finger.

The enzyme catalyses S-ubiquitinyl-[E2 ubiquitin-conjugating enzyme]-L-cysteine + [acceptor protein]-L-lysine = [E2 ubiquitin-conjugating enzyme]-L-cysteine + N(6)-ubiquitinyl-[acceptor protein]-L-lysine.. The protein operates within protein modification; protein ubiquitination. In terms of biological role, no E3 ubiquitin-protein ligase activity observed when associated with the E2 enzyme UBC8 in vitro. This Arabidopsis thaliana (Mouse-ear cress) protein is Putative E3 ubiquitin-protein ligase XBAT35 (XBAT35).